The primary structure comprises 569 residues: Undecaprenyl phosphate-alpha-4-amino-4-deoxy-L-arabinose arabinosyl transferase 1 (569 aa).

12 helical membrane passes run 27–47, 98–120, 129–149, 151–171, 194–214, 225–245, 275–295, 311–331, 334–354, 366–386, 396–416, and 420–440; these read GLILAFVMFYLLPLMSHGLWI, LFGVRIASALSTGVSVWLTYLLA, INAASALLYMSFGLIAGQAGY, NLDPQFTLWVNLSMVAVWFAI, LMTKGFLALLLPVLIALPYML, YGLVAVVVCALVSLPWVLAVH, PWWFYLPLLFASTLPWALLLP, AYLALWFLLPLAFFSLSSGKL, YIMPCLLPVALLMGQTVVKWL, GVFNTVLASVALVALLYLQAT, FSLSLAYIVVVGWIIANALQV, and LTLWAMPALGIGLLVALLPAA.

This sequence belongs to the glycosyltransferase 83 family.

The protein localises to the cell inner membrane. It catalyses the reaction 4-amino-4-deoxy-alpha-L-arabinopyranosyl di-trans,octa-cis-undecaprenyl phosphate + lipid IVA = lipid IIA + di-trans,octa-cis-undecaprenyl phosphate.. It participates in lipopolysaccharide metabolism; 4-amino-4-deoxy-beta-L-arabinose-lipid A biosynthesis. Its function is as follows. Catalyzes the transfer of the L-Ara4N moiety of the glycolipid undecaprenyl phosphate-alpha-L-Ara4N to lipid A. The modified arabinose is attached to lipid A and is required for resistance to polymyxin and cationic antimicrobial peptides. This chain is Undecaprenyl phosphate-alpha-4-amino-4-deoxy-L-arabinose arabinosyl transferase 1, found in Pseudomonas fluorescens (strain Pf0-1).